Consider the following 306-residue polypeptide: MQLKQVIIAYKARDSQSKRWAELCAKQLENRNCQVLMGPSGPKDNPYPVFLASASQPIDLAIVLGGDGTVLTSARHLAPAGIPILGVNVGGHLGFLTESVDEFQDTEKVWDRLFEDRYAIQRRMMLQAAVYEGHRTNLEPVTERYLGLNEFCVKPASADRMITSILEMEIDGEVVDQYVGDGLIISTPTGSTGYTVSASGPIMHDGMEAITITPICPMSLSSRPLILPAGSVVSIWPLGDYDLSTKLWMDGVLATSIWPAHRVDIRMADCRAKFIVLRENNSYYQTLREKLLWAGTRVRYTSTQHN.

D67 serves as the catalytic Proton acceptor. NAD(+) contacts are provided by residues 67-68 (DG), 149-150 (NE), D181, and 192-197 (TGYTVS).

It belongs to the NAD kinase family. Requires a divalent metal cation as cofactor.

The protein resides in the cytoplasm. The enzyme catalyses NAD(+) + ATP = ADP + NADP(+) + H(+). In terms of biological role, involved in the regulation of the intracellular balance of NAD and NADP, and is a key enzyme in the biosynthesis of NADP. Catalyzes specifically the phosphorylation on 2'-hydroxyl of the adenosine moiety of NAD to yield NADP. In Trichormus variabilis (strain ATCC 29413 / PCC 7937) (Anabaena variabilis), this protein is NAD kinase 1.